Here is a 144-residue protein sequence, read N- to C-terminus: MSNAYEEYMRQMVIPMRQELVRSGFEELTTEEAVTEFIENTTGTTLVVVNSVCGCAAGLARPSAGQAVVRAEKQPDHLVTVFAGQDKDATAKMREYFGEIPPSSPSMALLKGKEVVHFIHRHEIEGATMDEIITNLEQAFEKNC.

The protein belongs to the bacilliredoxin family.

The protein is Bacilliredoxin BCE_2233 of Bacillus cereus (strain ATCC 10987 / NRS 248).